Here is a 129-residue protein sequence, read N- to C-terminus: Small ribosomal subunit protein uS11 (129 aa).

It belongs to the universal ribosomal protein uS11 family. As to quaternary structure, part of the 30S ribosomal subunit. Interacts with proteins S7 and S18. Binds to IF-3.

Located on the platform of the 30S subunit, it bridges several disparate RNA helices of the 16S rRNA. Forms part of the Shine-Dalgarno cleft in the 70S ribosome. This Bartonella bacilliformis (strain ATCC 35685 / KC583 / Herrer 020/F12,63) protein is Small ribosomal subunit protein uS11.